The following is a 760-amino-acid chain: uncharacterized protein (760 aa).

Positions arginine 578 to isoleucine 587 are enriched in basic residues. Positions arginine 578–glutamate 604 are disordered. The span at proline 595–glutamate 604 shows a compositional bias: basic and acidic residues.

The protein resides in the mitochondrion. This is an uncharacterized protein from Dictyostelium citrinum (Slime mold).